A 420-amino-acid polypeptide reads, in one-letter code: Transcriptional adapter 2-beta (420 aa).

The segment at 4-59 adopts a ZZ-type zinc-finger fold; that stretch reads LGKKYCVYCLAEVSPLRFRCTECQDIELCPECFSAGAEIGHHRRYHGYQLVDGGRF. The Zn(2+) site is built by cysteine 9, cysteine 12, cysteine 23, cysteine 26, cysteine 32, cysteine 35, histidine 45, and histidine 49. One can recognise an SANT domain in the interval 65-118; sequence EAEGGWTSREEQLLLDAIEQFGFGNWEDMAAHVGASRTPQEVMEHYVSMYIHGN. The disordered stretch occupies residues 305–335; it reads SAEYEAARHKREKRKENKNLAGSKRGKEDGK.

In terms of assembly, interacts with GCN5L2, SMARCA4, SMARCE1 and PAX5. Component of the TFTC-HAT complex.

Its subcellular location is the nucleus. Coactivates PAX5-dependent transcription together with either SMARCA4 or GCN5L2. The polypeptide is Transcriptional adapter 2-beta (TADA2B) (Homo sapiens (Human)).